Here is an 818-residue protein sequence, read N- to C-terminus: Phenylalanine--tRNA ligase beta subunit (818 aa).

The tRNA-binding domain occupies 39–148 (AAELQKFEVA…EDAVVGENFT (110 aa)). The region spanning 423-498 (PQKKPLDFSA…RIYGYDKIES (76 aa)) is the B5 domain. Mg(2+) contacts are provided by aspartate 476, aspartate 482, glutamate 485, and glutamate 486. Positions 724 to 817 (SDFQANFRDY…IEQKFQGTLR (94 aa)) constitute an FDX-ACB domain.

It belongs to the phenylalanyl-tRNA synthetase beta subunit family. Type 1 subfamily. In terms of assembly, tetramer of two alpha and two beta subunits. Mg(2+) serves as cofactor.

It localises to the cytoplasm. The enzyme catalyses tRNA(Phe) + L-phenylalanine + ATP = L-phenylalanyl-tRNA(Phe) + AMP + diphosphate + H(+). The protein is Phenylalanine--tRNA ligase beta subunit of Rickettsia felis (strain ATCC VR-1525 / URRWXCal2) (Rickettsia azadi).